The following is a 152-amino-acid chain: Transcriptional regulator MraZ (152 aa).

2 SpoVT-AbrB domains span residues 5–52 (ASAI…PIHE) and 81–124 (AHEV…DEQA).

The protein belongs to the MraZ family. Forms oligomers.

The protein resides in the cytoplasm. It localises to the nucleoid. The protein is Transcriptional regulator MraZ of Shewanella sp. (strain ANA-3).